A 455-amino-acid chain; its full sequence is Phosphoglucosamine mutase (455 aa).

Catalysis depends on Ser106, which acts as the Phosphoserine intermediate. Mg(2+)-binding residues include Ser106, Asp245, Asp247, and Asp249. Position 106 is a phosphoserine (Ser106).

The protein belongs to the phosphohexose mutase family. Mg(2+) is required as a cofactor. In terms of processing, activated by phosphorylation.

It catalyses the reaction alpha-D-glucosamine 1-phosphate = D-glucosamine 6-phosphate. Its function is as follows. Catalyzes the conversion of glucosamine-6-phosphate to glucosamine-1-phosphate. The sequence is that of Phosphoglucosamine mutase from Acaryochloris marina (strain MBIC 11017).